Consider the following 436-residue polypeptide: uncharacterized protein (436 aa).

Residues 1-19 (MKKLLLASIIGLASTTSFA) form the signal peptide.

This is an uncharacterized protein from Rickettsia bellii (strain RML369-C).